Here is a 507-residue protein sequence, read N- to C-terminus: MVTIRADEISNIIRERIEQYNREVKVVNTGTVLQVGDGIARIHGLDEVMAGELVEFEEGTIGIALNLESNNVGVVLMGDGLLIQEGSSVKATGRIAQIPVSEAYLGRVINALAKPIDGRGEISASEFRLIESAAPGIISRRSVYEPLQTGLIAIDSMIPIGRGQRELIIGDRQTGKTAVATDTILNQQGQNVICVYVAIGQKASSVAQVVTTLQERGAMEYTIVVAETADSPATLQYLAPYTGAALAEYFMYRERHTLIIYDDPSKQAQAYRQMSLLLRRPPGREAYPGDVFYLHSRLLERAAKLSSSLGEGSMTALPIVETQSGDVSAYIPTNVISITDGQIFLSADLFNSGIRPAINVGISVSRVGSAAQIKAMKQVAGKLKLELAQFAELEAFAQFASDLDKATQNQLARGQRLRELLKQSQSAPLTVEEQIMTIYTGTNGYLDSLEVGQVRKFLVELRTYLKTNKPQFQEIISSTKTFTEEAEALLKEAIQEQTDRFILQEQA.

Position 170-177 (170-177 (GDRQTGKT)) interacts with ATP.

The protein belongs to the ATPase alpha/beta chains family. In terms of assembly, F-type ATPases have 2 components, CF(1) - the catalytic core - and CF(0) - the membrane proton channel. CF(1) has five subunits: alpha(3), beta(3), gamma(1), delta(1), epsilon(1). CF(0) has four main subunits: a, b, b' and c.

Its subcellular location is the plastid. The protein resides in the chloroplast thylakoid membrane. It carries out the reaction ATP + H2O + 4 H(+)(in) = ADP + phosphate + 5 H(+)(out). In terms of biological role, produces ATP from ADP in the presence of a proton gradient across the membrane. The alpha chain is a regulatory subunit. This chain is ATP synthase subunit alpha, chloroplastic, found in Nicotiana tomentosiformis (Tobacco).